We begin with the raw amino-acid sequence, 141 residues long: Hemoglobin subunit alpha-D (141 aa).

The Globin domain occupies 1–141 (MLNAEDKKLI…VSAVLAEKYR (141 aa)). Heme b-binding residues include His58 and His87.

This sequence belongs to the globin family. Heterotetramer of two alpha-D chains and two beta chains. In terms of tissue distribution, red blood cells.

Involved in oxygen transport from the lung to the various peripheral tissues. The chain is Hemoglobin subunit alpha-D (HBAD) from Phasianus colchicus colchicus (Black-necked pheasant).